The primary structure comprises 393 residues: NAD(P)H-quinone oxidoreductase subunit H, chloroplastic (393 aa).

This sequence belongs to the complex I 49 kDa subunit family. In terms of assembly, NDH is composed of at least 16 different subunits, 5 of which are encoded in the nucleus.

It localises to the plastid. The protein localises to the chloroplast thylakoid membrane. The catalysed reaction is a plastoquinone + NADH + (n+1) H(+)(in) = a plastoquinol + NAD(+) + n H(+)(out). The enzyme catalyses a plastoquinone + NADPH + (n+1) H(+)(in) = a plastoquinol + NADP(+) + n H(+)(out). NDH shuttles electrons from NAD(P)H:plastoquinone, via FMN and iron-sulfur (Fe-S) centers, to quinones in the photosynthetic chain and possibly in a chloroplast respiratory chain. The immediate electron acceptor for the enzyme in this species is believed to be plastoquinone. Couples the redox reaction to proton translocation, and thus conserves the redox energy in a proton gradient. The protein is NAD(P)H-quinone oxidoreductase subunit H, chloroplastic of Liriodendron tulipifera (Tuliptree).